The following is a 52-amino-acid chain: uncharacterized protein (52 aa).

This is an uncharacterized protein from Dictyostelium discoideum (Social amoeba).